The chain runs to 331 residues: ADP,ATP carrier protein 1, mitochondrial (331 aa).

Solcar repeat units follow at residues 29–122 (KNFA…FKRM), 134–226 (KWFG…LKPV), and 238–320 (ASFA…LQIL). 5 helical membrane passes run 31–58 (FAID…VKLL), 99–123 (TANV…KRMF), 132–152 (YWKW…SSLF), 202–223 (FNIS…YDSL), and 237–257 (FASF…SYPI). Residues Arg104 and Lys116 each coordinate ADP. Residue Arg261 coordinates ADP. Residues 261–266 (RRRMMM) are important for transport activity. A Nucleotide carrier signature motif motif is present at residues 261–266 (RRRMMM). Residues 297-317 (AGANILRAIAGAGVLSGYDQL) form a helical membrane-spanning segment.

Belongs to the mitochondrial carrier (TC 2.A.29) family. As to quaternary structure, monomer.

The protein resides in the mitochondrion inner membrane. The catalysed reaction is ADP(in) + ATP(out) = ADP(out) + ATP(in). With respect to regulation, the matrix-open state (m-state) is inhibited by the membrane-permeable bongkrekic acid (BKA). The cytoplasmic-open state (c-state) is inhibited by the membrane-impermeable toxic inhibitor carboxyatractyloside (CATR). Its function is as follows. ADP:ATP antiporter that mediates import of ADP into the mitochondrial matrix for ATP synthesis, and export of ATP out to fuel the cell. Cycles between the cytoplasmic-open state (c-state) and the matrix-open state (m-state): operates by the alternating access mechanism with a single substrate-binding site intermittently exposed to either the cytosolic (c-state) or matrix (m-state) side of the inner mitochondrial membrane. The polypeptide is ADP,ATP carrier protein 1, mitochondrial (ANT-G1) (Triticum aestivum (Wheat)).